A 582-amino-acid polypeptide reads, in one-letter code: MSLKGKFFAFLPNPNTSSNKFFKSILEKKGATIVSSIQNCLQSSRKEVVILIEDSFVDSDMHLTQKDIFQREAGLNDVDEFLGKIEQSGIQCVKTSCITKWVQNDKFAFQKDDLIKFQPSIIVISDNADDGQSSTDKESEISTDVESERNDDSNNKDMIQASKPLKRLLQGDKGRASLVTDKTKYKNNELIIGALKRLTKKYEIEGEKFRARSYRLAKQSMENCDFNVRSGEEAHTKLRNIGPSIAKKIQVILDTGVLPGLNDSVGLEDKLKYFKNCYGIGSEIAKRWNLLNFESFCVAAKKDPEEFVSDWTILFGWSYYDDWLCKMSRNECFTHLKKVQKALRGIDPECQVELQGSYNRGYSKCGDIDLLFFKPFCNDTTELAKIMETLCIKLYKDGYIHCFLQLTPNLEKLFLKRIVERFRTAKIVGYGERKRWYSSEIIKKFFMGVKLSPRELEELKEMKNDEGTLLIEEEEEEETKLKPIDQYMSLNAKDGNYCRRLDFFCCKWDELGAGRIHYTGSKEYNRWIRILAAQKGFKLTQHGLFRNNILLESFNERRIFELLNLKYAEPEHRNIEWEKKTA.

The segment at 127–161 (NADDGQSSTDKESEISTDVESERNDDSNNKDMIQA) is disordered. Positions 135–155 (TDKESEISTDVESERNDDSNN) are enriched in basic and acidic residues. The tract at residues 360-369 (RGYSKCGDID) is involved in ssDNA binding. Mg(2+) is bound by residues Asp367, Asp369, and Asp502.

This sequence belongs to the DNA polymerase type-X family. Interacts with DNL4 subunit of the DNL4-LIF1 complex. Mg(2+) is required as a cofactor.

The protein resides in the nucleus. The catalysed reaction is DNA(n) + a 2'-deoxyribonucleoside 5'-triphosphate = DNA(n+1) + diphosphate. Stimulated by the interaction with the DNL4-LIF1 complex. In terms of biological role, repair polymerase. Involved in gap-filling in DNA nonhomologous end joining (NHEJ) required for double-strand break repair. Seems to conduct DNA synthesis in a stepwise distributive fashion rather than in a processive fashion as for other DNA polymerases. Preferentially acts upon short gaps formed by the alignment of linear duplexes with complementary single-strand ends. Required for filling gaps that need removal of a 5'- or 3'-terminal mismatch, however lacks nuclease activities. The chain is DNA polymerase IV (POL4) from Saccharomyces cerevisiae (strain ATCC 204508 / S288c) (Baker's yeast).